The chain runs to 513 residues: Protein PNS1 (513 aa).

Pro residues predominate over residues 1-13 (MSNNNYPPPPNPP). A disordered region spans residues 1-41 (MSNNNYPPPPNPPNYQGEEQVHNVQPDLENNQEKYYAEQPQ). Topologically, residues 1–60 (MSNNNYPPPPNPPNYQGEEQVHNVQPDLENNQEKYYAEQPQPSQQFEESFKIDKPKWNDW) are cytoplasmic. A helical membrane pass occupies residues 61-81 (PFTVFFLLTVAGFIAIAGITL). Topologically, residues 82 to 108 (NALKKTYGLQGSSIYNSTDTFTLNTNT) are extracellular. Asn-97 carries N-linked (GlcNAc...) asparagine glycosylation. The helical transmembrane segment at 109–129 (IILFGFIIVVGVVLSVLIIVY) threads the bilayer. Residues 130-136 (ARMAPRV) lie on the Cytoplasmic side of the membrane. A helical transmembrane segment spans residues 137–157 (FITTGLILNIILGLGTCIYYF). Residues 158-163 (VAHYYS) are Extracellular-facing. A helical transmembrane segment spans residues 164-182 (AAIVFLVFTLFTAWCYWSC). The Cytoplasmic portion of the chain corresponds to 183–210 (RHRIPFSATVLEITIDVMKRYPSTLITS). The helical transmembrane segment at 211–231 (FIGIIVSGLFSTLFSVVIVAT) threads the bilayer. The Extracellular segment spans residues 232 to 251 (YVKYDPDSQGCDVAGGGCSQ). The helical transmembrane segment at 252–272 (SKLIGVLVFVFFAGYYISEVI) threads the bilayer. Residues 273 to 309 (KNVIHITIAGIYGTWYYLSNSDQGEPKHPALGAFKRA) lie on the Cytoplasmic side of the membrane. The helical transmembrane segment at 310-330 (MTYCFGSVCFGSLIVSIIQLI) threads the bilayer. The Extracellular segment spans residues 331 to 346 (RSFVQILKQNAFGSGD). The helical transmembrane segment at 347–367 (NCAGCGFLILDFVLGFIDWIV) threads the bilayer. Residues 368 to 412 (RYFNHYAYCYVALYGKSYLKSARDTFDLIRFKGMDALINDCFINT) lie on the Cytoplasmic side of the membrane. Residues 413-433 (SLNLYSMFVGYVVALLAYFYL) form a helical membrane-spanning segment. Topologically, residues 434–460 (KFTDPAYNSSGTFYAPVVAFSFLISGQ) are extracellular. Asn-441 is a glycosylation site (N-linked (GlcNAc...) asparagine). A helical transmembrane segment spans residues 461–481 (ITRIALTVISSGISTFFVALA). Over 482-513 (KDPEVFQMTNRDRFDEIFRNYPQVLQKITSDH) the chain is Cytoplasmic.

It belongs to the CTL (choline transporter-like) family.

It localises to the cell membrane. Its function is as follows. Probably involved in transport through the plasma membrane. This is Protein PNS1 (PNS1) from Debaryomyces hansenii (strain ATCC 36239 / CBS 767 / BCRC 21394 / JCM 1990 / NBRC 0083 / IGC 2968) (Yeast).